The sequence spans 677 residues: Transketolase (677 aa).

His-27 contacts substrate. Residues His-66 and 114–116 each bind thiamine diphosphate; that span reads GPL. Asp-155 lines the Mg(2+) pocket. 2 residues coordinate thiamine diphosphate: Gly-156 and Asn-185. Asn-185 and Ile-187 together coordinate Mg(2+). Residues His-261, Arg-356, and Ser-383 each contribute to the substrate site. His-261 contributes to the thiamine diphosphate binding site. Residues Glu-415 and Phe-442 each coordinate thiamine diphosphate. Glu-415 functions as the Proton donor in the catalytic mechanism. Positions 466, 474, and 525 each coordinate substrate.

The protein belongs to the transketolase family. In terms of assembly, homodimer. It depends on Mg(2+) as a cofactor. Requires Ca(2+) as cofactor. Mn(2+) is required as a cofactor. Co(2+) serves as cofactor. The cofactor is thiamine diphosphate.

It catalyses the reaction D-sedoheptulose 7-phosphate + D-glyceraldehyde 3-phosphate = aldehydo-D-ribose 5-phosphate + D-xylulose 5-phosphate. In terms of biological role, catalyzes the transfer of a two-carbon ketol group from a ketose donor to an aldose acceptor, via a covalent intermediate with the cofactor thiamine pyrophosphate. This chain is Transketolase (TKT), found in Scheffersomyces stipitis (strain ATCC 58785 / CBS 6054 / NBRC 10063 / NRRL Y-11545) (Yeast).